Here is a 762-residue protein sequence, read N- to C-terminus: Protein PHTF1 (762 aa).

In terms of domain architecture, PHTF spans 6–150 (RDAISWYQKK…VHCQIVSTQI (145 aa)). 3 helical membrane passes run 77–97 (GLVRVVFFPLFSNWWIQVTSL), 99–119 (IFVWLLLLYFMQVIAIVLYLM), and 121–141 (PIVNISEVLGPLCLMLLMGTV). Residues 152–184 (RPSGNNGNRRRRKLRKTVNGDGSRENGNNSSDK) form a disordered region. 2 N-linked (GlcNAc...) asparagine glycosylation sites follow: Asn-179 and Asn-180. 5 positions are modified to phosphoserine: Ser-272, Ser-276, Ser-277, Ser-334, and Ser-336. 2 disordered regions span residues 344-380 (SAAFSQGSRSGVSGGSRSLNMSRRDSESTRHDSETED) and 393-415 (RSSVTSDSEGAHVNTLHSGTKRD). Low complexity predominate over residues 348 to 361 (SQGSRSGVSGGSRS). The N-linked (GlcNAc...) asparagine glycan is linked to Asn-363. Residues 365–376 (SRRDSESTRHDS) show a composition bias toward basic and acidic residues. Asn-431 is a glycosylation site (N-linked (GlcNAc...) asparagine). Helical transmembrane passes span 473-493 (GVGYQMLGNVVTIGLAFFPFL), 512-532 (EILTLFCGAPPVTPIIVLSII), 611-631 (VVVSSVFLLTLSIAFICCAQV), and 645-665 (WEFLIWETALLLFLLRLASLG). N-linked (GlcNAc...) asparagine glycosylation is found at Asn-674 and Asn-733. A helical membrane pass occupies residues 737–757 (VVILSAVSGVISDLLGFNIRL).

Interacts with FEM1B. As to expression, widely expressed with highest levels in testis.

The protein resides in the endoplasmic reticulum membrane. Its subcellular location is the golgi apparatus. It is found in the cis-Golgi network membrane. This Homo sapiens (Human) protein is Protein PHTF1.